Reading from the N-terminus, the 309-residue chain is Taste receptor type 2 member 31 (309 aa).

The Extracellular segment spans residues 1–2 (MI). Residues 3 to 23 (TFLPTIFSILVVVIFVIGNFG) form a helical membrane-spanning segment. The Cytoplasmic segment spans residues 24–55 (NGFIALVNSIEWVKRQKISFADQILTALAVSR). Residues 56–76 (VGLLWALLLNWYSTVFNPAFY) traverse the membrane as a helical segment. The Extracellular segment spans residues 77 to 100 (SVGVRTTVYDVWTVTGHFSNWLAT). Residues 101-121 (SLSIFYLLKIANFSNLIFLHL) traverse the membrane as a helical segment. Residues 122–126 (KRRVK) lie on the Cytoplasmic side of the membrane. Residues 127–147 (SVILVMLLGPLLFLACQLFVI) form a helical membrane-spanning segment. The Extracellular portion of the chain corresponds to 148–181 (NMKEILRTKEYEGNMTWKIKLRSAMYLSDATITT). The N-linked (GlcNAc...) asparagine glycan is linked to Asn161. The chain crosses the membrane as a helical span at residues 182–202 (LANLVPFTLTLLSFLLLICSL). Over 203 to 229 (CKHLNKMQLHGKGSQDPSTKVHIKVLQ) the chain is Cytoplasmic. Residues 230 to 250 (TVISFLLLCAIYFLSIMISVW) traverse the membrane as a helical segment. At 251–259 (SFGSLENKP) the chain is on the extracellular side. A helical transmembrane segment spans residues 260 to 280 (VFMFCKAIRFSYPSIHPFILI). Residues 281–309 (WGNKKLKQTFLSVLRQVRYWVKGEKPSSP) are Cytoplasmic-facing.

Belongs to the G-protein coupled receptor T2R family.

The protein localises to the membrane. Its function is as follows. Receptor that may play a role in the perception of bitterness and is gustducin-linked. May play a role in sensing the chemical composition of the gastrointestinal content. The activity of this receptor may stimulate alpha gustducin, mediate PLC-beta-2 activation and lead to the gating of TRPM5. This Pongo pygmaeus (Bornean orangutan) protein is Taste receptor type 2 member 31 (TAS2R31).